We begin with the raw amino-acid sequence, 122 residues long: MAPNTSRKQKVIKTLTVDVSSPTENGVFDPASYSKYLIDHIKVDGAVGNLGNAIEVTEDGSIVTVVSSAKFSGKYLKYLTKKYLKKNQLRDWIRFVSIRQNQYKLVFYQVTPEDADEEEDDE.

The protein belongs to the eukaryotic ribosomal protein eL22 family. In terms of assembly, component of the large ribosomal subunit (LSU). Mature yeast ribosomes consist of a small (40S) and a large (60S) subunit. The 40S small subunit contains 1 molecule of ribosomal RNA (18S rRNA) and 33 different proteins (encoded by 57 genes). The large 60S subunit contains 3 rRNA molecules (25S, 5.8S and 5S rRNA) and 46 different proteins (encoded by 81 genes).

It localises to the cytoplasm. Functionally, component of the ribosome, a large ribonucleoprotein complex responsible for the synthesis of proteins in the cell. The small ribosomal subunit (SSU) binds messenger RNAs (mRNAs) and translates the encoded message by selecting cognate aminoacyl-transfer RNA (tRNA) molecules. The large subunit (LSU) contains the ribosomal catalytic site termed the peptidyl transferase center (PTC), which catalyzes the formation of peptide bonds, thereby polymerizing the amino acids delivered by tRNAs into a polypeptide chain. The nascent polypeptides leave the ribosome through a tunnel in the LSU and interact with protein factors that function in enzymatic processing, targeting, and the membrane insertion of nascent chains at the exit of the ribosomal tunnel. This Saccharomyces cerevisiae (strain ATCC 204508 / S288c) (Baker's yeast) protein is Large ribosomal subunit protein eL22B.